We begin with the raw amino-acid sequence, 291 residues long: ATP synthase gamma chain (291 aa).

Belongs to the ATPase gamma chain family. As to quaternary structure, F-type ATPases have 2 components, CF(1) - the catalytic core - and CF(0) - the membrane proton channel. CF(1) has five subunits: alpha(3), beta(3), gamma(1), delta(1), epsilon(1). CF(0) has three main subunits: a, b and c.

The protein localises to the cell inner membrane. Functionally, produces ATP from ADP in the presence of a proton gradient across the membrane. The gamma chain is believed to be important in regulating ATPase activity and the flow of protons through the CF(0) complex. This chain is ATP synthase gamma chain, found in Chlorobium phaeobacteroides (strain DSM 266 / SMG 266 / 2430).